The primary structure comprises 483 residues: Glutamyl-tRNA(Gln) amidotransferase subunit A (483 aa).

Active-site charge relay system residues include Lys77 and Ser152. Residue Ser176 is the Acyl-ester intermediate of the active site.

Belongs to the amidase family. GatA subfamily. Heterotrimer of A, B and C subunits.

It catalyses the reaction L-glutamyl-tRNA(Gln) + L-glutamine + ATP + H2O = L-glutaminyl-tRNA(Gln) + L-glutamate + ADP + phosphate + H(+). Allows the formation of correctly charged Gln-tRNA(Gln) through the transamidation of misacylated Glu-tRNA(Gln) in organisms which lack glutaminyl-tRNA synthetase. The reaction takes place in the presence of glutamine and ATP through an activated gamma-phospho-Glu-tRNA(Gln). This Listeria welshimeri serovar 6b (strain ATCC 35897 / DSM 20650 / CCUG 15529 / CIP 8149 / NCTC 11857 / SLCC 5334 / V8) protein is Glutamyl-tRNA(Gln) amidotransferase subunit A.